Here is a 379-residue protein sequence, read N- to C-terminus: Cobalt-precorrin-5B C(1)-methyltransferase (379 aa).

This sequence belongs to the CbiD family.

The enzyme catalyses Co-precorrin-5B + S-adenosyl-L-methionine = Co-precorrin-6A + S-adenosyl-L-homocysteine. It functions in the pathway cofactor biosynthesis; adenosylcobalamin biosynthesis; cob(II)yrinate a,c-diamide from sirohydrochlorin (anaerobic route): step 6/10. In terms of biological role, catalyzes the methylation of C-1 in cobalt-precorrin-5B to form cobalt-precorrin-6A. The protein is Cobalt-precorrin-5B C(1)-methyltransferase of Citrobacter koseri (strain ATCC BAA-895 / CDC 4225-83 / SGSC4696).